A 234-amino-acid chain; its full sequence is Ammonia monooxygenase gamma subunit (234 aa).

Positions 1-20 (MRMIKFLLLAILLAPFVAHS) are cleaved as a signal peptide. The Cytochrome c domain maps to 38–193 (ESLQRGAKGF…RFVADLVNYM (156 aa)). Heme c-binding residues include Cys51, Cys54, and His55. A helical membrane pass occupies residues 206 to 226 (ELGITVLLFLFGMLGLTYLLK).

This sequence belongs to the cytochrome c family. The soluble ammonia monooxygenase is a nonamer composed of three alpha subunits (AmoA), three beta subunits (AmoB) and three gamma subunits (Cytochrome c1 PetC). Heme c is required as a cofactor.

The protein localises to the cell membrane. It is found in the cytoplasm. In terms of biological role, part of the ammonia monooxygenase complex, which catalyzes the oxidation of ammonia to hydroxylamine, the first reaction in the process of ammonia oxidation to nitrite. The protein is Ammonia monooxygenase gamma subunit of Nitrosomonas europaea (strain ATCC 19718 / CIP 103999 / KCTC 2705 / NBRC 14298).